The chain runs to 232 residues: uncharacterized protein (232 aa).

Disordered stretches follow at residues Val123 to Pro147 and Ala169 to Arg200.

Belongs to the mycobacterial PPE family.

This is an uncharacterized protein from Mycobacterium tuberculosis (strain ATCC 25618 / H37Rv).